Here is a 240-residue protein sequence, read N- to C-terminus: Probable transcriptional regulatory protein YrbC (240 aa).

Belongs to the TACO1 family.

It is found in the cytoplasm. The sequence is that of Probable transcriptional regulatory protein YrbC (yrbC) from Bacillus subtilis (strain 168).